The chain runs to 265 residues: Transcriptional repressor DcmR (265 aa).

The segment at residues 17-36 (LDIKQAASLLNVSEASLRRW) is a DNA-binding region (H-T-H motif).

As to quaternary structure, monomer.

Transcriptional repressor of the dcmA gene and of its own gene. In Methylorubrum extorquens (strain DSM 6343 / CIP 106787 / DM4) (Methylobacterium extorquens), this protein is Transcriptional repressor DcmR (dcmR).